The chain runs to 167 residues: MNFLDESFWLTISFVIFVYLIYRPAKKAILNALDTKISEIQEKVLKAKKLKEDAALLFEQTKLQIQKLETLRSQMIEESDKATKQIIQDKTKEMEEFLERKKADAIQLIQNQKSTASKDLQDEFCDEVITLVSKYFRSAKLSEKSIAKNLMDKSDFVHNDSKATYLH.

A helical transmembrane segment spans residues 7 to 25; sequence SFWLTISFVIFVYLIYRPA.

This sequence belongs to the ATPase B chain family. In terms of assembly, F-type ATPases have 2 components, F(1) - the catalytic core - and F(0) - the membrane proton channel. F(1) has five subunits: alpha(3), beta(3), gamma(1), delta(1), epsilon(1). F(0) has three main subunits: a(1), b(2) and c(10-14). The alpha and beta chains form an alternating ring which encloses part of the gamma chain. F(1) is attached to F(0) by a central stalk formed by the gamma and epsilon chains, while a peripheral stalk is formed by the delta and b chains.

It localises to the cell inner membrane. F(1)F(0) ATP synthase produces ATP from ADP in the presence of a proton or sodium gradient. F-type ATPases consist of two structural domains, F(1) containing the extramembraneous catalytic core and F(0) containing the membrane proton channel, linked together by a central stalk and a peripheral stalk. During catalysis, ATP synthesis in the catalytic domain of F(1) is coupled via a rotary mechanism of the central stalk subunits to proton translocation. Functionally, component of the F(0) channel, it forms part of the peripheral stalk, linking F(1) to F(0). This is ATP synthase subunit b from Rickettsia prowazekii (strain Madrid E).